Consider the following 262-residue polypeptide: uncharacterized protein (262 aa).

Transmembrane regions (helical) follow at residues 42–62, 71–91, 115–135, 145–165, 185–205, 206–226, and 235–255; these read IAKF…TVLN, IINI…LLYF, IGLA…MELI, VVSY…CCFN, LWAY…YSNH, PLMI…PFMI, and AYPS…NYAI.

The protein resides in the membrane. This is an uncharacterized protein from Acanthamoeba polyphaga mimivirus (APMV).